The following is a 386-amino-acid chain: Lycopene beta-cyclase (386 aa).

4-34 (DVLLAGAGLANGLIALALRAARPDLRVLLLD) contacts NAD(+).

Belongs to the lycopene cyclase family. FAD serves as cofactor.

It catalyses the reaction a carotenoid psi-end group = a carotenoid beta-end derivative. It carries out the reaction all-trans-lycopene = gamma-carotene. The enzyme catalyses gamma-carotene = all-trans-beta-carotene. Its pathway is carotenoid biosynthesis; astaxanthin biosynthesis. Its function is as follows. Catalyzes the double cyclization reaction which converts lycopene to beta-carotene. The polypeptide is Lycopene beta-cyclase (Paracoccus sp. (strain N81106 / MBIC 01143) (Agrobacterium aurantiacum)).